A 549-amino-acid polypeptide reads, in one-letter code: Tigger transposable element-derived protein 7 (549 aa).

Residues 1–52 (MNKRGKYTTLNLEEKMKVLSRIEAGRSLKSVMDEFGISKSTFYDIKKNKKLI) enclose the HTH psq-type domain. 2 DNA-binding regions (H-T-H motif) span residues 28–48 (LKSV…IKKN) and 101–132 (VELQ…FRNR). The HTH CENPB-type domain occupies 68–139 (KRKRTTGAKY…RNRHAIGNRK (72 aa)). The region spanning 169–399 (LCLAQLYSGD…VKQITIANAW (231 aa)) is the DDE-1 domain. The tract at residues 527–549 (FLKPRPHNIKDSFSGPSTSGSNH) is disordered. Polar residues predominate over residues 540 to 549 (SGPSTSGSNH).

The protein belongs to the tigger transposable element derived protein family. In terms of tissue distribution, expressed in all tissues tested. Higher expression in testis and ovary.

The protein resides in the nucleus. This Homo sapiens (Human) protein is Tigger transposable element-derived protein 7 (TIGD7).